Here is a 241-residue protein sequence, read N- to C-terminus: 1-(5-phosphoribosyl)-5-[(5-phosphoribosylamino)methylideneamino] imidazole-4-carboxamide isomerase (241 aa).

Asp8 functions as the Proton acceptor in the catalytic mechanism. The Proton donor role is filled by Asp129.

It belongs to the HisA/HisF family.

It is found in the cytoplasm. The catalysed reaction is 1-(5-phospho-beta-D-ribosyl)-5-[(5-phospho-beta-D-ribosylamino)methylideneamino]imidazole-4-carboxamide = 5-[(5-phospho-1-deoxy-D-ribulos-1-ylimino)methylamino]-1-(5-phospho-beta-D-ribosyl)imidazole-4-carboxamide. The protein operates within amino-acid biosynthesis; L-histidine biosynthesis; L-histidine from 5-phospho-alpha-D-ribose 1-diphosphate: step 4/9. This Caulobacter sp. (strain K31) protein is 1-(5-phosphoribosyl)-5-[(5-phosphoribosylamino)methylideneamino] imidazole-4-carboxamide isomerase.